The primary structure comprises 207 residues: NADH-quinone oxidoreductase subunit C (207 aa).

It belongs to the complex I 30 kDa subunit family. As to quaternary structure, NDH-1 is composed of 14 different subunits. Subunits NuoB, C, D, E, F, and G constitute the peripheral sector of the complex.

The protein localises to the cell inner membrane. The catalysed reaction is a quinone + NADH + 5 H(+)(in) = a quinol + NAD(+) + 4 H(+)(out). Its function is as follows. NDH-1 shuttles electrons from NADH, via FMN and iron-sulfur (Fe-S) centers, to quinones in the respiratory chain. The immediate electron acceptor for the enzyme in this species is believed to be ubiquinone. Couples the redox reaction to proton translocation (for every two electrons transferred, four hydrogen ions are translocated across the cytoplasmic membrane), and thus conserves the redox energy in a proton gradient. In Thermus thermophilus (strain ATCC BAA-163 / DSM 7039 / HB27), this protein is NADH-quinone oxidoreductase subunit C.